A 399-amino-acid chain; its full sequence is uncharacterized protein (399 aa).

Transmembrane regions (helical) follow at residues 7-27 (FSAL…LYLI), 33-53 (FLQI…FEVP), 79-99 (AFFP…IWAL), 131-151 (LLIT…SLNI), 153-173 (FPFL…SVFI), 208-228 (VLLI…ISRY), 242-262 (SLGY…TLTI), 296-316 (PLGI…HPIV), 335-355 (LNSG…GIIS), and 357-377 (AFGL…PIIL).

Belongs to the major facilitator superfamily. Drug:H(+) antiporter-3 (DHA3) (TC 2.A.1.21) family.

Its subcellular location is the cell membrane. This is an uncharacterized protein from Bacillus subtilis (strain 168).